The sequence spans 281 residues: uncharacterized protein (281 aa).

3 helical membrane passes run 23-45 (LLLSYIINLISSIIILIIGFFAA), 65-87 (IANFLAALVRYIIITFALIASLG), and 94-116 (TSVIAILGAAGMAIGLALQGSLS).

The protein belongs to the MscS (TC 1.A.23) family.

The protein resides in the cell membrane. This is an uncharacterized protein from Buchnera aphidicola subsp. Baizongia pistaciae (strain Bp).